The chain runs to 380 residues: Gonadotropin-releasing hormone II receptor (380 aa).

Residues 1–40 (MSAVNGTPWGSSAREEVWAGSGVEVEGSELPTFSTAAKVR) lie on the Extracellular side of the membrane. The chain crosses the membrane as a helical span at residues 41-60 (VGVTIVLFVSSAGGNLAVLW). Residues 61–76 (SVTRPQPSQLRPSPVR) lie on the Cytoplasmic side of the membrane. Residues 77–96 (RLFAHLAAADLLVTFVVMPL) traverse the membrane as a helical segment. The Extracellular portion of the chain corresponds to 97–114 (DATWNITVQWLAGDIACR). An N-linked (GlcNAc...) asparagine glycan is attached at Asn101. A disulfide bridge links Cys113 with Cys188. Residues 115-136 (TLMFLKLMAMYAAAFLPVVIGL) form a helical membrane-spanning segment. Residues 137–160 (DRQAAVLNPLGSRSGVRKLLGAAW) lie on the Cytoplasmic side of the membrane. Residues 161–178 (GLSFLLALPQLFLFHTVH) traverse the membrane as a helical segment. Residues 179–204 (RAGPVPFTQCATKGSFKARWQETTYN) lie on the Extracellular side of the membrane. A helical transmembrane segment spans residues 205-224 (LFTFCCLFLLPLTAMAICYS). Residues 225 to 278 (RIVLGVSSPRTRKGSHAPAGEFALRRSFDNRPRVRLRALRLALLVLLTFILCWT) lie on the Cytoplasmic side of the membrane. A helical transmembrane segment spans residues 279 to 297 (PYYLLGLWYWFSPSMLSEV). Over 298–303 (PPSLSH) the chain is Extracellular. The helical transmembrane segment at 304-323 (ILFLFGLLNAPLDPLLYGAF) threads the bilayer. The Cytoplasmic portion of the chain corresponds to 324 to 380 (TLGCRRGHQELSMDSSREEGSRRMFQQDIQALRQTEVQKTVTSRKAGETKDIPITSI).

The protein belongs to the G-protein coupled receptor 1 family. Phosphorylated on the C-terminal cytoplasmic tail.

Its subcellular location is the cell membrane. Functionally, receptor for gonadotropin releasing hormone II (GnRH II). This receptor mediates its action by association with G proteins that activate a phosphatidylinositol-calcium second messenger system. The chain is Gonadotropin-releasing hormone II receptor (GNRHR2) from Callithrix jacchus (White-tufted-ear marmoset).